A 203-amino-acid polypeptide reads, in one-letter code: Holliday junction branch migration complex subunit RuvA (203 aa).

The interval 1–64 is domain I; that stretch reads MIGRLRGTLA…EDAQLLYGFI (64 aa). The segment at 65–143 is domain II; the sequence is GKRDRDFFRE…AWEVVPSMFA (79 aa). The interval 144–154 is flexible linker; that stretch reads LVPNQPDMPAG. Residues 155–203 are domain III; that stretch reads QVASAESDAVSALISLGYKPQEASKAVSAIKDKNLSSEDMIRRALKGMI.

It belongs to the RuvA family. In terms of assembly, homotetramer. Forms an RuvA(8)-RuvB(12)-Holliday junction (HJ) complex. HJ DNA is sandwiched between 2 RuvA tetramers; dsDNA enters through RuvA and exits via RuvB. An RuvB hexamer assembles on each DNA strand where it exits the tetramer. Each RuvB hexamer is contacted by two RuvA subunits (via domain III) on 2 adjacent RuvB subunits; this complex drives branch migration. In the full resolvosome a probable DNA-RuvA(4)-RuvB(12)-RuvC(2) complex forms which resolves the HJ.

The protein resides in the cytoplasm. Functionally, the RuvA-RuvB-RuvC complex processes Holliday junction (HJ) DNA during genetic recombination and DNA repair, while the RuvA-RuvB complex plays an important role in the rescue of blocked DNA replication forks via replication fork reversal (RFR). RuvA specifically binds to HJ cruciform DNA, conferring on it an open structure. The RuvB hexamer acts as an ATP-dependent pump, pulling dsDNA into and through the RuvAB complex. HJ branch migration allows RuvC to scan DNA until it finds its consensus sequence, where it cleaves and resolves the cruciform DNA. This Pseudomonas fluorescens (strain SBW25) protein is Holliday junction branch migration complex subunit RuvA.